The primary structure comprises 176 residues: Large ribosomal subunit protein uL16 (176 aa).

The protein belongs to the universal ribosomal protein uL16 family.

This Thermoplasma volcanium (strain ATCC 51530 / DSM 4299 / JCM 9571 / NBRC 15438 / GSS1) protein is Large ribosomal subunit protein uL16.